Reading from the N-terminus, the 116-residue chain is Methionine-R-sulfoxide reductase B1 (116 aa).

A MsrB domain is found at Met-1 to Lys-106. The Zn(2+) site is built by Cys-23, Cys-26, Cys-71, and Cys-74. Sec-95 functions as the Nucleophile in the catalytic mechanism. A non-standard amino acid (selenocysteine) is located at residue Sec-95.

This sequence belongs to the MsrB Met sulfoxide reductase family. It depends on Zn(2+) as a cofactor. Truncated MSRB1/SEPX1 proteins produced by failed UGA/Sec decoding are ubiquitinated by the CRL2(FEM1C) E3 ubiquitin-protein ligase complex.

Its subcellular location is the cytoplasm. It localises to the nucleus. It is found in the cytoskeleton. It catalyses the reaction L-methionyl-[protein] + [thioredoxin]-disulfide + H2O = L-methionyl-(R)-S-oxide-[protein] + [thioredoxin]-dithiol. The catalysed reaction is [thioredoxin]-disulfide + L-methionine + H2O = L-methionine (R)-S-oxide + [thioredoxin]-dithiol. Its function is as follows. Methionine-sulfoxide reductase that specifically reduces methionine (R)-sulfoxide back to methionine. While in many cases, methionine oxidation is the result of random oxidation following oxidative stress, methionine oxidation is also a post-translational modification that takes place on specific residue. Acts as a regulator of actin assembly by reducing methionine (R)-sulfoxide mediated by MICALs (MICAL1, MICAL2 or MICAL3) on actin, thereby promoting filament repolymerization. Plays a role in innate immunity by reducing oxidized actin, leading to actin repolymerization in macrophages. The polypeptide is Methionine-R-sulfoxide reductase B1 (Msrb1) (Mus musculus (Mouse)).